Reading from the N-terminus, the 281-residue chain is Diaminopimelate epimerase (281 aa).

The substrate site is built by asparagine 14 and asparagine 65. The active-site Proton donor is the cysteine 74. Substrate-binding positions include 75 to 76 (GN), asparagine 165, asparagine 198, and 216 to 217 (ER). The active-site Proton acceptor is cysteine 225. 226–227 (GT) serves as a coordination point for substrate.

The protein belongs to the diaminopimelate epimerase family. As to quaternary structure, homodimer.

It is found in the cytoplasm. It carries out the reaction (2S,6S)-2,6-diaminopimelate = meso-2,6-diaminopimelate. Its pathway is amino-acid biosynthesis; L-lysine biosynthesis via DAP pathway; DL-2,6-diaminopimelate from LL-2,6-diaminopimelate: step 1/1. Catalyzes the stereoinversion of LL-2,6-diaminopimelate (L,L-DAP) to meso-diaminopimelate (meso-DAP), a precursor of L-lysine and an essential component of the bacterial peptidoglycan. In Leptospira borgpetersenii serovar Hardjo-bovis (strain JB197), this protein is Diaminopimelate epimerase.